The chain runs to 256 residues: Large ribosomal subunit protein bL28m (256 aa).

Residues 1–55 (MPLHKYPVWLWKRLQLREGICSRLPGHYLRSLEEERTPTPVHYRPHGAKFKINPK) constitute a mitochondrion transit peptide.

The protein belongs to the bacterial ribosomal protein bL28 family. As to quaternary structure, component of the mitochondrial large ribosomal subunit (mt-LSU). Mature mammalian 55S mitochondrial ribosomes consist of a small (28S) and a large (39S) subunit. The 28S small subunit contains a 12S ribosomal RNA (12S mt-rRNA) and 30 different proteins. The 39S large subunit contains a 16S rRNA (16S mt-rRNA), a copy of mitochondrial valine transfer RNA (mt-tRNA(Val)), which plays an integral structural role, and 52 different proteins. Interacts with OXA1L. As to expression, found in a variety of normal tissues including spleen, testes, thymus, liver, kidney, brain, adrenal, lung and retinal tissue.

The protein resides in the mitochondrion. This is Large ribosomal subunit protein bL28m (MRPL28) from Homo sapiens (Human).